A 553-amino-acid polypeptide reads, in one-letter code: Dihydroxy-acid dehydratase (553 aa).

Aspartate 78 lines the Mg(2+) pocket. Cysteine 119 provides a ligand contact to [2Fe-2S] cluster. Positions 120 and 121 each coordinate Mg(2+). N6-carboxylysine is present on lysine 121. A [2Fe-2S] cluster-binding site is contributed by cysteine 193. Residue glutamate 441 coordinates Mg(2+). Serine 467 (proton acceptor) is an active-site residue.

It belongs to the IlvD/Edd family. As to quaternary structure, homodimer. [2Fe-2S] cluster is required as a cofactor. Requires Mg(2+) as cofactor.

It catalyses the reaction (2R)-2,3-dihydroxy-3-methylbutanoate = 3-methyl-2-oxobutanoate + H2O. It carries out the reaction (2R,3R)-2,3-dihydroxy-3-methylpentanoate = (S)-3-methyl-2-oxopentanoate + H2O. The protein operates within amino-acid biosynthesis; L-isoleucine biosynthesis; L-isoleucine from 2-oxobutanoate: step 3/4. It functions in the pathway amino-acid biosynthesis; L-valine biosynthesis; L-valine from pyruvate: step 3/4. Functions in the biosynthesis of branched-chain amino acids. Catalyzes the dehydration of (2R,3R)-2,3-dihydroxy-3-methylpentanoate (2,3-dihydroxy-3-methylvalerate) into 2-oxo-3-methylpentanoate (2-oxo-3-methylvalerate) and of (2R)-2,3-dihydroxy-3-methylbutanoate (2,3-dihydroxyisovalerate) into 2-oxo-3-methylbutanoate (2-oxoisovalerate), the penultimate precursor to L-isoleucine and L-valine, respectively. The sequence is that of Dihydroxy-acid dehydratase from Pelobacter propionicus (strain DSM 2379 / NBRC 103807 / OttBd1).